We begin with the raw amino-acid sequence, 463 residues long: Fumarate hydratase class II (463 aa).

Substrate contacts are provided by residues 95-97 (SGT), 126-129 (HPND), 136-138 (SSN), and Thr184. The active-site Proton donor/acceptor is His185. The active site involves Ser315. Substrate contacts are provided by residues Ser316 and 321–323 (KIN).

This sequence belongs to the class-II fumarase/aspartase family. Fumarase subfamily. As to quaternary structure, homotetramer.

It is found in the cytoplasm. The enzyme catalyses (S)-malate = fumarate + H2O. Its pathway is carbohydrate metabolism; tricarboxylic acid cycle; (S)-malate from fumarate: step 1/1. In terms of biological role, involved in the TCA cycle. Catalyzes the stereospecific interconversion of fumarate to L-malate. This chain is Fumarate hydratase class II, found in Chlamydia trachomatis serovar D (strain ATCC VR-885 / DSM 19411 / UW-3/Cx).